The primary structure comprises 589 residues: MYRWLVRILGTIFRFCDRSVPPARALLKRRRSDSTLFSTVDTDEIPAKRPRLDCFIHQVKNSLYNAASLFGFPFQLTTKPMVTSACNGTRNVAPSGEVFSNSSSCELTGSGSWNNMLKLGNKSPNGISDYPKIRVTVTRDQPRRVLPSFGFTLNSEGCNRRPGGRRHSKGNPESSLMWKPQEQAVTEMISEESGKGLRRPHCTVEEGVQKEEREKYRKLLERLKESGHGNSVCPVTSNYHSSQRSQMDTLKTKGWGEEQNHGVKTTQFVPKQYRLVETRGPLCSLRSEKRCSKGKITDTETMVGIRFENESRRGYQLEPDLSEEVSARLRLGSGSNGLLRRKVSIIETKEKNCSGKERDRRTDDLLELTEDMEKEISNALGHGPQDEILSSAFKLRITRGDIQTLKNYHWLNDEVINFYMNLLVERNKKQGYPALHVFSTFFYPKLKSGGYQAVKRWTKGVNLFEQEIILVPIHRKVHWSLVVIDLRKKCLKYLDSMGQKGHRICEILLQYLQDESKTKRNSDLNLLEWTHHSMKPHEIPQQLNGSDCGMFTCKYADYISRDKPITFTQHQMPLFRKKMVWEILHQQLL.

The short motif at 28-31 (KRRR) is the Nuclear localization signal element. Ser-32 carries the post-translational modification Phosphoserine. The Nuclear localization signal signature appears at 46-51 (PAKRPR). Residues 155–176 (SEGCNRRPGGRRHSKGNPESSL) are disordered. The Nuclear export signal signature appears at 317-332 (LEPDLSEEVSARLRLG). Phosphoserine occurs at positions 333 and 344. The protease stretch occupies residues 396-560 (RITRGDIQTL…FTCKYADYIS (165 aa)). Residues His-478 and Asp-495 contribute to the active site. Catalysis depends on Cys-548, which acts as the Nucleophile.

It belongs to the peptidase C48 family. In terms of assembly, binds to SUMO2 and SUMO3. Interacts with the C-terminal domain of NUP153 via its N-terminus. Interacts with MTA1. Polyubiquitinated; which leads to proteasomal degradation.

It is found in the nucleus. Its subcellular location is the nuclear pore complex. The protein resides in the nucleus membrane. The protein localises to the cytoplasm. Its function is as follows. Protease that catalyzes two essential functions in the SUMO pathway. The first is the hydrolysis of an alpha-linked peptide bond at the C-terminal end of the small ubiquitin-like modifier (SUMO) propeptides, SUMO1, SUMO2 and SUMO3 leading to the mature form of the proteins. The second is the deconjugation of SUMO1, SUMO2 and SUMO3 from targeted proteins, by cleaving an epsilon-linked peptide bond between the C-terminal glycine of the mature SUMO and the lysine epsilon-amino group of the target protein. May down-regulate CTNNB1 levels and thereby modulate the Wnt pathway. Deconjugates SUMO2 from MTA1. Plays a dynamic role in adipogenesis by desumoylating and promoting the stabilization of CEBPB. Acts as a regulator of the cGAS-STING pathway by catalyzing desumoylation of CGAS and STING1 during the late phase of viral infection. The protein is Sentrin-specific protease 2 of Homo sapiens (Human).